The primary structure comprises 473 residues: ATP synthase subunit beta (473 aa).

158–165 is a binding site for ATP; sequence GGAGVGKT.

It belongs to the ATPase alpha/beta chains family. In terms of assembly, F-type ATPases have 2 components, CF(1) - the catalytic core - and CF(0) - the membrane proton channel. CF(1) has five subunits: alpha(3), beta(3), gamma(1), delta(1), epsilon(1). CF(0) has three main subunits: a(1), b(2) and c(9-12). The alpha and beta chains form an alternating ring which encloses part of the gamma chain. CF(1) is attached to CF(0) by a central stalk formed by the gamma and epsilon chains, while a peripheral stalk is formed by the delta and b chains.

The protein localises to the cell membrane. The catalysed reaction is ATP + H2O + 4 H(+)(in) = ADP + phosphate + 5 H(+)(out). Produces ATP from ADP in the presence of a proton gradient across the membrane. The catalytic sites are hosted primarily by the beta subunits. The protein is ATP synthase subunit beta of Bacillus velezensis (strain DSM 23117 / BGSC 10A6 / LMG 26770 / FZB42) (Bacillus amyloliquefaciens subsp. plantarum).